We begin with the raw amino-acid sequence, 558 residues long: MSKLIRRVVTVLALTSMASSFASGKTEVAAAESLVTRFIASAEASDSNILQTTAKKIRFGRNKNQKPEQKNNNAFCDKEFYPCEGGQCQSSVDTRQESCYGKMYSVRVNDDCNVEISQAVPEYATVGSPYPIEILAVGKKDCVNVVITQQLPCEVEFVSSDPVTTPTSDSKLIWTIDRLGQGERCKITVWVKPLKEGCCFTAATVCACPELRSYTKCGQPAICIKQEGPECACLRCPVCYKIEVCNTGSAIARSVVVDNPVPDGYTHASGQRVLSFNLGDMRPGDSKCFTVEFCPQKRGKVTNVATVSYCGGHKCSANVTTVINEPCVQVNISGADWSYVCKPVEYTIVVSNPGDLKLYDVVIEDTAPSGASILEAAGAEICCNKAVWCIKEMCPGETLQFKVVAKAQTPGKFTNQVVVKTNSDCGTCTSCAEVTTHWKGLAATHMCVIDTNDPICVGENTVYRICVTNRGSAEDTNVSLILKFSKELQPVSSSGPTKGTITGNTVVFDALPKLGSKESVEFSVTLKGVAPGDARGEAILSSDTLTVPVADTENTHVY.

Positions 1-24 are cleaved as a signal peptide; sequence MSKLIRRVVTVLALTSMASSFASG. Residues 25-40 constitute a propeptide that is removed on maturation; the sequence is KTEVAAAESLVTRFIA.

Part of a disulfide cross-linked outer membrane complex (COMC) composed of the major outer membrane porin (MOMP), the small cysteine-rich protein (OmcA) and the large cysteine-rich periplasmic protein (OmcB).

Its subcellular location is the periplasm. In elementary bodies (EBs, the infectious stage, which is able to survive outside the host cell) provides the structural integrity of the outer envelope through disulfide cross-links with the small cysteine-rich protein and the major outer membrane porin. It has been described in publications as the Sarkosyl-insoluble COMC (Chlamydia outer membrane complex), and serves as the functional equivalent of peptidoglycan. It is present but the disulfide bonds are reduced in reticulate bodies (RBs). The chain is Large cysteine-rich periplasmic protein OmcB (omcB) from Chlamydia felis (strain Fe/C-56) (Chlamydophila felis).